The following is a 323-amino-acid chain: Lipid A biosynthesis myristoyltransferase (323 aa).

The helical transmembrane segment at 23–43 (YWGAWLGVAAMAGIALTPPKF) threads the bilayer. Residues 139 to 144 (HGWAVD) carry the HXXXXD motif motif.

This sequence belongs to the LpxL/LpxM/LpxP family. LpxM subfamily.

It is found in the cell inner membrane. The catalysed reaction is alpha-Kdo-(2-&gt;4)-alpha-Kdo-(2-&gt;6)-(dodecanoyl)-lipid IVA (E. coli) + tetradecanoyl-[ACP] = alpha-Kdo-(2-&gt;4)-alpha-Kdo-(2-&gt;6)-lipid A (E. coli) + holo-[ACP]. It carries out the reaction (9Z)-hexadecenoyl-(Kdo)2-lipid IVA (E. coli) + tetradecanoyl-[ACP] = ((9Z)-hexadecenoyl-tetradecanoyl)-(Kdo)2-lipid A + holo-[ACP]. The protein operates within glycolipid biosynthesis; KDO(2)-lipid A biosynthesis; KDO(2)-lipid A from CMP-3-deoxy-D-manno-octulosonate and lipid IV(A): step 4/4. It participates in bacterial outer membrane biogenesis; lipopolysaccharide biosynthesis. In terms of biological role, catalyzes the transfer of myristate from myristoyl-[acyl-carrier-protein] (ACP) to Kdo(2)-(lauroyl)-lipid IV(A) to form Kdo(2)-lipid A. Can probably also catalyze the transfer of myristate to Kdo(2)-(palmitoleoyl)-lipid IV(A) to form the cold-adapted Kdo(2)-lipid A. In vitro, can acylate Kdo(2)-lipid IV(A), but acylation of (KDO)2-(lauroyl)-lipid IV(A) is about 100 times faster. In vitro, can use lauroyl-ACP but displays a slight kinetic preference for myristoyl-ACP. This is Lipid A biosynthesis myristoyltransferase from Escherichia coli (strain K12).